The following is a 122-amino-acid chain: Lectin A (122 aa).

Position 38 (Tyr38) interacts with Ca(2+). Residues Glu44, Gln57, and Asp96 each coordinate an alpha-D-galactoside. Residues Asp96, Thr100, Asp103, and Asn104 each contribute to the Ca(2+) site. Position 103 (Asp103) interacts with an alpha-D-galactoside.

This sequence belongs to the LecA/PllA lectin family. Homotetramer.

Functionally, lectin that specifically binds alpha-galactoside-terminating glycoconjugates. Shows high apparent binding to the alpha-Gal epitope (Gal-alpha-1,3-Gal-beta-1,4-GlcNAc terminating glycans) as well as to Gal-alpha-1,4-GlcNAc and Gal-alpha-1,3-GalNAc. Gal-alpha-1,3-GalNAc may be one natural ligand bound by PllA both in the nematode symbiont and in infected insects. This is Lectin A from Photorhabdus laumondii subsp. laumondii (strain DSM 15139 / CIP 105565 / TT01) (Photorhabdus luminescens subsp. laumondii).